We begin with the raw amino-acid sequence, 1442 residues long: Sulfite reductase [NADPH] subunit beta (1442 aa).

The Flavodoxin-like domain maps to 682–831; the sequence is LHVYYASDGG…AYSEWEPKLW (150 aa). Ser-903 is subject to Phosphoserine. Residues Cys-1300, Cys-1306, Cys-1345, and Cys-1349 each contribute to the [4Fe-4S] cluster site. Siroheme is bound at residue Cys-1349.

Belongs to the nitrite and sulfite reductase 4Fe-4S domain family. Alpha(2)-beta(2). The alpha component is a flavoprotein, the beta component is a hemoprotein. Siroheme serves as cofactor. It depends on [4Fe-4S] cluster as a cofactor.

It localises to the cytoplasm. The catalysed reaction is hydrogen sulfide + 3 NADP(+) + 3 H2O = sulfite + 3 NADPH + 4 H(+). It participates in sulfur metabolism; hydrogen sulfide biosynthesis; hydrogen sulfide from sulfite (NADPH route): step 1/1. Its function is as follows. Catalyzes the reduction of sulfite to sulfide, one of several activities required for the biosynthesis of L-cysteine from sulfate. This is Sulfite reductase [NADPH] subunit beta (MET5) from Saccharomyces cerevisiae (strain ATCC 204508 / S288c) (Baker's yeast).